Here is an 835-residue protein sequence, read N- to C-terminus: MKVLALRHSVAQVYADTQIYTHDETKDDYENAFLISNLTTHNILYLNYSVKTLQILNKSGIAAIEIQKNDELFTLIRCNFTYDYIDDIVYLHDYSYYTNNEIRTDQHWVTKTNIEDYLLPGWKLMYVGYNGNDTRGHYNFSFKCQNAATDDDAIIEYIYSNELDFQNFILKKIKERMTTSLPIARLSNRVFRDKLFKTLVSDHSRVVNVGPRNESMFTFLDHPSIKQFSNGPYLVKDTIKLKQERWLGKRLSQFDIGQYKNMLNVLTTLYQYYDMYHEKPIIYMVGSAPSYWIHDVKQYSDLKFETWDPLDTPYSDLHHKELFYASDVTKLKDNSILYVDIRTDRENADWKTWRKIVEEQTANNLNIAYKYLSTGKAKVCCVKMTAMDLELPISAKLLHHPTTEIRSEFYLIMDIWDSKNTKRFIPKGVLYSYINNTITENVFIQQPFKLRTLRNEYVVALYALSNDFNNREDVVKLVNNQKNALITVRINNTFKDEPKVGFKDIYDWTFLPTDFETNESIITSYDGCLGMFGLSISLASKPTGNNHLFILSGTNKYFKLDQFANHMSISRRSHQIRFSESATSYSGYIFRDLSNNNFNLIGTNVENSVSGHVYNALIYYRYNYSFDLKRWIYLHSTNKASIEGGRYYEHAPIELIYACRSAREFAKLQDDLTVLRYSNEIENYINKVYSITYADDPNYFIGIKFKNIPYEYDVKVPHLTFGVLNISDSMVPDVVAILKKFKNELFRMDVTTSYTYMLSDEIYVANVSGVLSTYFKLYNAFYKEQITFGQSRMFIPHITLSFSNKRVVRIGSTRLNIDFIYLRKIKGDTVFDMTE.

The interval 171–245 (KKIKERMTTS…KDTIKLKQER (75 aa)) is N7-methyltransferase activity. A 2'-O-methyltransferase activity region spans residues 246–428 (WLGKRLSQFD…KNTKRFIPKG (183 aa)). The tract at residues 429 to 555 (VLYSYINNTI…NHLFILSGTN (127 aa)) is N7-methyltransferase activity. The segment at 556 to 692 (KYFKLDQFAN…NYINKVYSIT (137 aa)) is GTase/RTPase activity. The 2'-5'-phosphodiesterase activity stretch occupies residues 693 to 835 (YADDPNYFIG…KGDTVFDMTE (143 aa)). Catalysis depends on for 2'-5'-phosphodiesterase activity residues His718, Thr720, His797, and Thr799.

The protein belongs to the rotavirus VP3 family. Interacts with VP1. Interacts with VP2.

Its subcellular location is the virion. The catalysed reaction is a 5'-end diphospho-ribonucleoside in mRNA + GTP + H(+) = a 5'-end (5'-triphosphoguanosine)-ribonucleoside in mRNA + diphosphate. The enzyme catalyses a 5'-end (5'-triphosphoguanosine)-ribonucleoside in mRNA + S-adenosyl-L-methionine = a 5'-end (N(7)-methyl 5'-triphosphoguanosine)-ribonucleoside in mRNA + S-adenosyl-L-homocysteine. It catalyses the reaction 5'-triphosphoadenylyl-(2'-&gt;5')-adenylyl-(2'-&gt;5')-adenosine + 2 H2O = 2 AMP + ATP + 2 H(+). In terms of biological role, multifunctional enzyme involved in mRNA capping. Catalyzes the formation of the 5' cap structure on the viral plus-strand transcripts. Specifically binds to GTP and displays guanylyltransferase and methyltransferase activities. Has affinity for ssRNA but not for dsRNA. Capping activity is non-specific and caps RNAs that initiate with either a G or an A residue. Together with VP1 polymerase, forms a VP1-VP3 complex positioned near the channels situated at each of the five-fold vertices of the core. Following infection, the outermost layer of the virus is lost, leaving a double-layered particle (DLP) made up of the core and VP6 shell. VP1 then catalyzes the transcription of fully conservative plus-strand genomic RNAs that are capped by VP3 and extruded through the DLP's channels into the cytoplasm where they function as mRNAs for translation of viral proteins. DLPs probably have an RNA triphosphatase activity as well, whereas open cores do not. Functionally, counteracts the host innate immune response thanks to its phosphodiesterase that degrades the 5'-triphosphorylated, 2'-5' linked adenylate oligomers produced by the host cell IFN-inducible 2',5'-oligoadenylate synthetase (OAS). The host RNaseL is therefore not activated. This is Protein VP3 from Rotavirus A (strain RVA/Cow/France/RF/1975/G6P6[1]) (RV-A).